The following is a 425-amino-acid chain: Trigger factor (425 aa).

The PPIase FKBP-type domain maps to 163–248 (GDTAVIDFEG…VHEIKTKELP (86 aa)).

This sequence belongs to the FKBP-type PPIase family. Tig subfamily.

Its subcellular location is the cytoplasm. It catalyses the reaction [protein]-peptidylproline (omega=180) = [protein]-peptidylproline (omega=0). Its function is as follows. Involved in protein export. Acts as a chaperone by maintaining the newly synthesized protein in an open conformation. Functions as a peptidyl-prolyl cis-trans isomerase. The polypeptide is Trigger factor (Bacillus cereus (strain Q1)).